A 254-amino-acid chain; its full sequence is Sulfoacetaldehyde reductase (254 aa).

NADP(+) is bound at residue 8–32 (FITGATSGFGEAAAQVFADAGWSLV). Serine 141 provides a ligand contact to substrate. Catalysis depends on tyrosine 154, which acts as the Proton acceptor.

The protein belongs to the short-chain dehydrogenases/reductases (SDR) family. In terms of assembly, homodimer and heterotetramer.

It catalyses the reaction 2-hydroxyethane-1-sulfonate + NADP(+) = sulfoacetaldehyde + NADPH + H(+). It participates in organosulfur degradation. Its function is as follows. Catalyzes the formation of isethionate from 2-sulfoacetaldehyde in the deaminative pathway of taurine. The enzyme is specific for NADPH; NADH is not a substrate. In Klebsiella oxytoca, this protein is Sulfoacetaldehyde reductase (isfD).